Reading from the N-terminus, the 230-residue chain is V-type proton ATPase subunit E (230 aa).

It belongs to the V-ATPase E subunit family. In terms of assembly, V-ATPase is a heteromultimeric enzyme composed of a peripheral catalytic V1 complex (components A to H) attached to an integral membrane V0 proton pore complex (components: a, c, c', c'', d, e, f and VOA1).

Its subcellular location is the vacuole membrane. Functionally, subunit of the V1 complex of vacuolar(H+)-ATPase (V-ATPase), a multisubunit enzyme composed of a peripheral complex (V1) that hydrolyzes ATP and a membrane integral complex (V0) that translocates protons. V-ATPase is responsible for acidifying and maintaining the pH of intracellular compartments. The polypeptide is V-type proton ATPase subunit E (Neurospora crassa (strain ATCC 24698 / 74-OR23-1A / CBS 708.71 / DSM 1257 / FGSC 987)).